The primary structure comprises 172 residues: 6,7-dimethyl-8-ribityllumazine synthase (172 aa).

Residues phenylalanine 22 and 56–58 (AFE) contribute to the 5-amino-6-(D-ribitylamino)uracil site. 78–79 (LG) lines the (2S)-2-hydroxy-3-oxobutyl phosphate pocket. 80–82 (AII) serves as a coordination point for 5-amino-6-(D-ribitylamino)uracil. The active-site Proton donor is histidine 88. Position 113 (phenylalanine 113) interacts with 5-amino-6-(D-ribitylamino)uracil. Arginine 127 is a (2S)-2-hydroxy-3-oxobutyl phosphate binding site.

This sequence belongs to the DMRL synthase family.

The catalysed reaction is (2S)-2-hydroxy-3-oxobutyl phosphate + 5-amino-6-(D-ribitylamino)uracil = 6,7-dimethyl-8-(1-D-ribityl)lumazine + phosphate + 2 H2O + H(+). It participates in cofactor biosynthesis; riboflavin biosynthesis; riboflavin from 2-hydroxy-3-oxobutyl phosphate and 5-amino-6-(D-ribitylamino)uracil: step 1/2. Catalyzes the formation of 6,7-dimethyl-8-ribityllumazine by condensation of 5-amino-6-(D-ribitylamino)uracil with 3,4-dihydroxy-2-butanone 4-phosphate. This is the penultimate step in the biosynthesis of riboflavin. The protein is 6,7-dimethyl-8-ribityllumazine synthase of Protochlamydia amoebophila (strain UWE25).